A 124-amino-acid polypeptide reads, in one-letter code: Small ribosomal subunit protein uS12 (124 aa).

3-methylthioaspartic acid is present on Asp-89.

Belongs to the universal ribosomal protein uS12 family. Part of the 30S ribosomal subunit. Contacts proteins S8 and S17. May interact with IF1 in the 30S initiation complex.

Functionally, with S4 and S5 plays an important role in translational accuracy. Interacts with and stabilizes bases of the 16S rRNA that are involved in tRNA selection in the A site and with the mRNA backbone. Located at the interface of the 30S and 50S subunits, it traverses the body of the 30S subunit contacting proteins on the other side and probably holding the rRNA structure together. The combined cluster of proteins S8, S12 and S17 appears to hold together the shoulder and platform of the 30S subunit. The sequence is that of Small ribosomal subunit protein uS12 from Yersinia enterocolitica serotype O:8 / biotype 1B (strain NCTC 13174 / 8081).